Reading from the N-terminus, the 180-residue chain is ATP-dependent protease subunit HslV (180 aa).

Thr5 is a catalytic residue. The Na(+) site is built by Gly165, Cys168, and Thr171.

The protein belongs to the peptidase T1B family. HslV subfamily. A double ring-shaped homohexamer of HslV is capped on each side by a ring-shaped HslU homohexamer. The assembly of the HslU/HslV complex is dependent on binding of ATP.

Its subcellular location is the cytoplasm. The enzyme catalyses ATP-dependent cleavage of peptide bonds with broad specificity.. Allosterically activated by HslU binding. In terms of biological role, protease subunit of a proteasome-like degradation complex believed to be a general protein degrading machinery. This Helicobacter hepaticus (strain ATCC 51449 / 3B1) protein is ATP-dependent protease subunit HslV.